The following is a 352-amino-acid chain: Protein RecA (352 aa).

ATP is bound at residue 74-81; that stretch reads GPESSGKT.

The protein belongs to the RecA family.

Its subcellular location is the cytoplasm. Can catalyze the hydrolysis of ATP in the presence of single-stranded DNA, the ATP-dependent uptake of single-stranded DNA by duplex DNA, and the ATP-dependent hybridization of homologous single-stranded DNAs. It interacts with LexA causing its activation and leading to its autocatalytic cleavage. The sequence is that of Protein RecA from Ralstonia nicotianae (strain ATCC BAA-1114 / GMI1000) (Ralstonia solanacearum).